We begin with the raw amino-acid sequence, 882 residues long: MVEVDSRKQLLYDPIVRLSGIADKFVMQDATSSNMKVSLQECIDTLANYQDECKKLKRNEPTLSPSERYSIYESAYIYYKIIHIMVLTRIPSLPQFSSAKSSDATNEDKELMQIYNMLVKTLLSDEKIAQIKSYLRANYPDKNSKGKESIVNKQLLNNEVFMLPLSGSPISAVQLNHLIQMYDSSLLLIDVRPRAEFDSKHIKAKSVICVEPVSFKNSFTDLEVEKKSLITSPQKEIALFQARDKYNYIVIYTQQSEKTQFYMHQQLVLLDILMNKSFAKPLNEKNIKVFTLDKGFSGWVSKKGACETTTQNGDAIYISGNTSSLNLQNLPQLSPNIGSSMDKSMRDMMSTSADFEGRTYQLPQQQQPVFARTPSFKNLFNKAKSSSTSSVTSSSPAPSQLVRPQTSSMPPLEQNFTQYPETPKLLTQINTNTMPLSQISPISSRAMSPMTKNMLTQSPQLPMKISRTTIGNGAMLDLKPHPDSKPPGQPVPALPQLPHHMTGTYQNLNQPKLDLDFTVGLENMGNSCYMNCIIQCLLSTHELSQIFLNNSYEKHINLNSKLGSKGVLAKYFARLVHTMYREGSFKRPLEKNKPIQPIQFKMACGSINSLFKDNTQQDSQEFCQFLLDGLHEDLNQCGANPPLKELSEDAEKMREKLSMRIASSIEWERFLTTDFSVIVDLFQGQYASQLKCKVCGCTSTTYQTFSVLSVPVPHVSSCHILDCFNEFTKVEKLGTDELWSCPTCKKKQPSTKKLTITRLPRNLIIHLKRFDNMMNKNNVFVKYPFLLDLTPYWANDFDGRLPPGVTDELPTRGQVPPFRYKLNAVASHVGSLYGGHYTAYVNKGINRGWHYFDDTSYRPIKNETECITPNAYVLFYHRVYGV.

Positions 182–308 (YDSSLLLIDV…WVSKKGACET (127 aa)) constitute a Rhodanese domain. Over residues 382-399 (KAKSSSTSSVTSSSPAPS) the composition is skewed to low complexity. Positions 382 to 411 (KAKSSSTSSVTSSSPAPSQLVRPQTSSMPP) are disordered. The segment covering 402-411 (VRPQTSSMPP) has biased composition (polar residues). A USP domain is found at 519-879 (VGLENMGNSC…NAYVLFYHRV (361 aa)). The Nucleophile role is filled by C528. Residue H836 is the Proton acceptor of the active site.

Belongs to the peptidase C19 family.

It localises to the cytoplasm. The protein localises to the late endosome membrane. The enzyme catalyses Thiol-dependent hydrolysis of ester, thioester, amide, peptide and isopeptide bonds formed by the C-terminal Gly of ubiquitin (a 76-residue protein attached to proteins as an intracellular targeting signal).. With respect to regulation, RFU1 is an inhibitor of deubiquitination activity. In terms of biological role, ubiquitin thioesterase that acts at the late endosome/prevacuolar compartment to recover ubiquitin from ubiquitinated membrane proteins en route to the vacuole. Also removes ubiquitin from soluble proteins targeted to proteasomes. Is essential to maintain a normal level of free ubiquitin. Required for promoting coordination of DNA replication and avoids DNA overreplication. In Vanderwaltozyma polyspora (strain ATCC 22028 / DSM 70294 / BCRC 21397 / CBS 2163 / NBRC 10782 / NRRL Y-8283 / UCD 57-17) (Kluyveromyces polysporus), this protein is Ubiquitin carboxyl-terminal hydrolase 4 (DOA4).